The primary structure comprises 126 residues: Histone H2B 1.1 (126 aa).

The span at 1–12 shows a compositional bias: low complexity; it reads MPEPAKSAPAPK. A disordered region spans residues 1–35; the sequence is MPEPAKSAPAPKKGSKKAVTKTQKKDGKKRRKSRK. 2 positions are modified to N6-acetyllysine: Lys-6 and Lys-13. Ser-15 carries the post-translational modification Phosphoserine. N6-acetyllysine occurs at positions 16 and 21. A glycan (O-linked (GlcNAc) serine) is linked at Ser-113. Residue Lys-121 forms a Glycyl lysine isopeptide (Lys-Gly) (interchain with G-Cter in ubiquitin) linkage.

The protein belongs to the histone H2B family. The nucleosome is a histone octamer containing two molecules each of H2A, H2B, H3 and H4 assembled in one H3-H4 heterotetramer and two H2A-H2B heterodimers. The octamer wraps approximately 147 bp of DNA. Monoubiquitination of Lys-121 by BRE1 gives a specific tag for epigenetic transcriptional activation and is also prerequisite for histone H3 'Lys-4' and 'Lys-79' methylation. In terms of processing, phosphorylated on Ser-15 during developmentally programmed apoptosis; which may facilitate apoptotic chromatin condensation. Post-translationally, glcNAcylation at Ser-113 promotes monoubiquitination of Lys-121. It fluctuates in response to extracellular glucose, and associates with transcribed genes.

The protein localises to the nucleus. It is found in the chromosome. Its function is as follows. Core component of nucleosome. Nucleosomes wrap and compact DNA into chromatin, limiting DNA accessibility to the cellular machineries which require DNA as a template. Histones thereby play a central role in transcription regulation, DNA repair, DNA replication and chromosomal stability. DNA accessibility is regulated via a complex set of post-translational modifications of histones, also called histone code, and nucleosome remodeling. This Xenopus laevis (African clawed frog) protein is Histone H2B 1.1.